A 1503-amino-acid polypeptide reads, in one-letter code: DNA-directed RNA polymerase subunit beta' (1503 aa).

4 residues coordinate Zn(2+): C60, C62, C75, and C78. The Mg(2+) site is built by D626, D628, and D630. Residues C1002, C1075, C1082, and C1085 each coordinate Zn(2+). The disordered stretch occupies residues 1439–1503 (EESQQAEEAP…EEEDNDLPAF (65 aa)). A compositionally biased stretch (acidic residues) spans 1486–1503 (GDNDQSDAEEEDNDLPAF).

It belongs to the RNA polymerase beta' chain family. In terms of assembly, the RNAP catalytic core consists of 2 alpha, 1 beta, 1 beta' and 1 omega subunit. When a sigma factor is associated with the core the holoenzyme is formed, which can initiate transcription. Mg(2+) serves as cofactor. Requires Zn(2+) as cofactor.

It carries out the reaction RNA(n) + a ribonucleoside 5'-triphosphate = RNA(n+1) + diphosphate. DNA-dependent RNA polymerase catalyzes the transcription of DNA into RNA using the four ribonucleoside triphosphates as substrates. The sequence is that of DNA-directed RNA polymerase subunit beta' from Chloroflexus aurantiacus (strain ATCC 29364 / DSM 637 / Y-400-fl).